The sequence spans 383 residues: 2-aminoethylphosphonate--pyruvate transaminase (383 aa).

At K192 the chain carries N6-(pyridoxal phosphate)lysine.

This sequence belongs to the class-V pyridoxal-phosphate-dependent aminotransferase family. PhnW subfamily. Homodimer. It depends on pyridoxal 5'-phosphate as a cofactor.

The catalysed reaction is (2-aminoethyl)phosphonate + pyruvate = phosphonoacetaldehyde + L-alanine. In terms of biological role, involved in phosphonate degradation. The polypeptide is 2-aminoethylphosphonate--pyruvate transaminase (Rhizobium meliloti (strain 1021) (Ensifer meliloti)).